The sequence spans 170 residues: NADH-quinone oxidoreductase subunit B (170 aa).

Positions 37, 38, 102, and 131 each coordinate [4Fe-4S] cluster.

This sequence belongs to the complex I 20 kDa subunit family. As to quaternary structure, NDH-1 is composed of 14 different subunits. Subunits NuoB, C, D, E, F, and G constitute the peripheral sector of the complex. Requires [4Fe-4S] cluster as cofactor.

The protein localises to the cell inner membrane. It catalyses the reaction a quinone + NADH + 5 H(+)(in) = a quinol + NAD(+) + 4 H(+)(out). Functionally, NDH-1 shuttles electrons from NADH, via FMN and iron-sulfur (Fe-S) centers, to quinones in the respiratory chain. The immediate electron acceptor for the enzyme in this species is believed to be ubiquinone. Couples the redox reaction to proton translocation (for every two electrons transferred, four hydrogen ions are translocated across the cytoplasmic membrane), and thus conserves the redox energy in a proton gradient. The sequence is that of NADH-quinone oxidoreductase subunit B from Geobacter sulfurreducens (strain ATCC 51573 / DSM 12127 / PCA).